The following is a 127-amino-acid chain: Cytochrome c2 (127 aa).

An N-terminal signal peptide occupies residues 1–20 (MRKLVFGLFVLAASVAPAAA). Position 21 is a pyrrolidone carboxylic acid (Gln21). Residues Cys33, Cys36, His37, and Met99 each contribute to the heme c site.

The protein belongs to the cytochrome c family. Binds 1 heme c group covalently per subunit.

In terms of biological role, cytochrome c2 is found mainly in purple, non-sulfur, photosynthetic bacteria where it functions as the electron donor to the oxidized bacteriochlorophyll in the photophosphorylation pathway. However, it may also have a role in the respiratory chain and is found in some non-photosynthetic bacteria. The sequence is that of Cytochrome c2 (cycA) from Blastochloris viridis (Rhodopseudomonas viridis).